Consider the following 131-residue polypeptide: Small ribosomal subunit protein uS9 (131 aa).

The protein belongs to the universal ribosomal protein uS9 family.

The chain is Small ribosomal subunit protein uS9 from Actinobacillus pleuropneumoniae serotype 7 (strain AP76).